Reading from the N-terminus, the 864-residue chain is Microtubule-associated protein TORTIFOLIA1 (864 aa).

The segment at 1–26 (MSTPTTSGSAAKPTRPARSSSLATRS) is disordered. Residues 17–26 (ARSSSLATRS) show a composition bias toward polar residues. 5 HEAT repeats span residues 76–113 (ETLPMFLNCLYDSCSDPKPAVKKECLHLLSYVCSLHCD), 117–154 (AHLTKIIAQIVKRLKDSDSGVRDACRDTIGALSGIYLK), 167–204 (LAVGLFVKPLFEAMGEQNKVVQSGASMCMARMVESAAS), 208–245 (TSFQKLCPRICKLLSNSSFLAKASLLPVVSSLSQVGAI), and 248–285 (QSLESLLESIHDCLGSTDWVTRKAAAETLTALASHSSG). Residues 329-353 (DGASDDSKLSASEQLGSEKNGEKRS) form a disordered region. A Phosphoserine modification is found at S414. The tract at residues 426–504 (NDEEESGLDD…QSEGSFTSNR (79 aa)) is disordered. The span at 439 to 448 (MGSSNRLKNT) shows a compositional bias: polar residues. Basic and acidic residues predominate over residues 449–459 (QADDKQVKGRF). Positions 489-504 (VSNTDNQSEGSFTSNR) are enriched in polar residues. A coiled-coil region spans residues 508 to 561 (SAIQRQLLQLERQQTNLMNMLQEFIGGSHDSMVTLEGRVRGLERIVEDMARDLS). The interval 615–670 (DDWFIPPHAASRNGQAGPRRSPRSEQYENEHMGNGRRGWDNKASGTIRFGEGPSAR) is disordered. Residues 636-654 (PRSEQYENEHMGNGRRGWD) are compositionally biased toward basic and acidic residues.

As to quaternary structure, interacts with WAV3. In terms of tissue distribution, expressed in roots, hypocotyls, stems, flowers, siliques, inflorescences, petioles, cotyledons, and leaves. Particularly present in root tips and shoot meristems.

The protein resides in the cytoplasm. It localises to the cytoskeleton. Plant-specific microtubule-associated protein (MAP) that regulates the orientation of cortical microtubules and the direction of organ growth. Determines microtubule organization by modulating microtubule severing. This is Microtubule-associated protein TORTIFOLIA1 from Arabidopsis thaliana (Mouse-ear cress).